The sequence spans 631 residues: tRNA uridine 5-carboxymethylaminomethyl modification enzyme MnmG (631 aa).

Residue 15–20 (GAGHAG) participates in FAD binding. The segment at 214 to 233 (YSKTEEEPGDKEPRHFSFTS) is disordered. 276–290 (GPRYCPSIETKVVRF) contacts NAD(+).

The protein belongs to the MnmG family. In terms of assembly, homodimer. Heterotetramer of two MnmE and two MnmG subunits. FAD is required as a cofactor.

The protein resides in the cytoplasm. Functionally, NAD-binding protein involved in the addition of a carboxymethylaminomethyl (cmnm) group at the wobble position (U34) of certain tRNAs, forming tRNA-cmnm(5)s(2)U34. In Lactobacillus delbrueckii subsp. bulgaricus (strain ATCC 11842 / DSM 20081 / BCRC 10696 / JCM 1002 / NBRC 13953 / NCIMB 11778 / NCTC 12712 / WDCM 00102 / Lb 14), this protein is tRNA uridine 5-carboxymethylaminomethyl modification enzyme MnmG.